A 203-amino-acid chain; its full sequence is Glycerol-3-phosphate acyltransferase (203 aa).

Helical transmembrane passes span 12–32 (ATLL…GLIL), 66–86 (TLLL…LWGV), 88–108 (AGIA…WLSF), 118–138 (IGVL…IWLA), and 159–179 (IALY…MTVI).

The protein belongs to the PlsY family. As to quaternary structure, probably interacts with PlsX.

The protein resides in the cell inner membrane. The catalysed reaction is an acyl phosphate + sn-glycerol 3-phosphate = a 1-acyl-sn-glycero-3-phosphate + phosphate. It functions in the pathway lipid metabolism; phospholipid metabolism. In terms of biological role, catalyzes the transfer of an acyl group from acyl-phosphate (acyl-PO(4)) to glycerol-3-phosphate (G3P) to form lysophosphatidic acid (LPA). This enzyme utilizes acyl-phosphate as fatty acyl donor, but not acyl-CoA or acyl-ACP. This is Glycerol-3-phosphate acyltransferase from Sinorhizobium fredii (strain NBRC 101917 / NGR234).